Here is a 316-residue protein sequence, read N- to C-terminus: tRNA dimethylallyltransferase (316 aa).

Position 17-24 (17-24 (GPTASGKT)) interacts with ATP. 19-24 (TASGKT) serves as a coordination point for substrate. Interaction with substrate tRNA regions lie at residues 42-45 (DSAL), 166-170 (QRLSR), 247-252 (RCVGYR), and 280-287 (KRQITWLR).

This sequence belongs to the IPP transferase family. As to quaternary structure, monomer. Mg(2+) is required as a cofactor.

The enzyme catalyses adenosine(37) in tRNA + dimethylallyl diphosphate = N(6)-dimethylallyladenosine(37) in tRNA + diphosphate. Catalyzes the transfer of a dimethylallyl group onto the adenine at position 37 in tRNAs that read codons beginning with uridine, leading to the formation of N6-(dimethylallyl)adenosine (i(6)A). This Escherichia coli O6:K15:H31 (strain 536 / UPEC) protein is tRNA dimethylallyltransferase.